Here is a 271-residue protein sequence, read N- to C-terminus: Sec-independent protein translocase protein TatC (271 aa).

A run of 5 helical transmembrane segments spans residues 24–44, 78–98, 112–132, 159–179, and 215–235; these read ISVGAIIVGFILCYSFSEQIF, FFAGLFLAMPVLFTQMWLFIA, FLFVTPVLFFMGGTLAYYFVF, LVIKLIIAFGITFELPVGLLL, and FTQVMLAIPIMLMYEISIFFG. Residues 247–271 are disordered; it reads AAEEAQWAADHNVDDDDVDHPEHKA.

Belongs to the TatC family. As to quaternary structure, the Tat system comprises two distinct complexes: a TatABC complex, containing multiple copies of TatA, TatB and TatC subunits, and a separate TatA complex, containing only TatA subunits. Substrates initially bind to the TatABC complex, which probably triggers association of the separate TatA complex to form the active translocon.

Its subcellular location is the cell inner membrane. Its function is as follows. Part of the twin-arginine translocation (Tat) system that transports large folded proteins containing a characteristic twin-arginine motif in their signal peptide across membranes. Together with TatB, TatC is part of a receptor directly interacting with Tat signal peptides. The sequence is that of Sec-independent protein translocase protein TatC from Magnetococcus marinus (strain ATCC BAA-1437 / JCM 17883 / MC-1).